Reading from the N-terminus, the 344-residue chain is uncharacterized protein (344 aa).

Residues 1 to 98 are Cytoplasmic-facing; it reads MIDFVKSRDT…NNDEIGIWNY (98 aa). A helical transmembrane segment spans residues 99–119; the sequence is ISVAEMGGVLLFLSYWIWTCL. Residue His-120 is a topological domain, lumenal. A helical transmembrane segment spans residues 121 to 141; it reads FSKIIFPAQKVICLYIFLFAL. Residues 142–198 lie on the Cytoplasmic side of the membrane; sequence NQTLQECIEEYVFSSECIKYRQFYSVYEIIDFLRTNFYRLFVIYCALGFGITRTVPK. A helical membrane pass occupies residues 199 to 219; sequence YLMIKGISIVIALCSVYWISL. The Lumenal portion of the chain corresponds to 220-222; the sequence is YKD. The helical transmembrane segment at 223–243 threads the bilayer; that stretch reads VYVVSEIFDMIQYEVSPAIWV. Residues 244–273 lie on the Cytoplasmic side of the membrane; it reads YSICHLLKQCTSVTTYENASKARFFRRMLN. The helical transmembrane segment at 274–294 threads the bilayer; the sequence is AFIFIFCASPMLHYLSNIIFG. The Lumenal segment spans residues 295 to 344; the sequence is NFDYRLSVIIGDLFTFMEKIAFPCYIMFPTHNEALAYNRNVAEEAQEKMI.

The protein belongs to the UPF0742 family.

Its subcellular location is the endoplasmic reticulum. The protein localises to the membrane. This is an uncharacterized protein from Schizosaccharomyces pombe (strain 972 / ATCC 24843) (Fission yeast).